Reading from the N-terminus, the 226-residue chain is tRNA (guanine-N(7)-)-methyltransferase (226 aa).

A disordered region spans residues 1 to 22 (MTTPQQPHGPLRSFGRLKSRPV). Glu59, Glu84, Asp111, and Asp133 together coordinate S-adenosyl-L-methionine. Asp133 is an active-site residue. Residue Lys137 participates in substrate binding. Residues 139 to 144 (RHNKRR) form an interaction with RNA region. Substrate-binding positions include Asp169 and 206 to 209 (TRYE).

The protein belongs to the class I-like SAM-binding methyltransferase superfamily. TrmB family.

It catalyses the reaction guanosine(46) in tRNA + S-adenosyl-L-methionine = N(7)-methylguanosine(46) in tRNA + S-adenosyl-L-homocysteine. It functions in the pathway tRNA modification; N(7)-methylguanine-tRNA biosynthesis. Catalyzes the formation of N(7)-methylguanine at position 46 (m7G46) in tRNA. The sequence is that of tRNA (guanine-N(7)-)-methyltransferase from Caulobacter vibrioides (strain ATCC 19089 / CIP 103742 / CB 15) (Caulobacter crescentus).